The chain runs to 91 residues: Small ribosomal subunit protein bS18 (91 aa).

It belongs to the bacterial ribosomal protein bS18 family. As to quaternary structure, part of the 30S ribosomal subunit. Forms a tight heterodimer with protein bS6.

In terms of biological role, binds as a heterodimer with protein bS6 to the central domain of the 16S rRNA, where it helps stabilize the platform of the 30S subunit. The chain is Small ribosomal subunit protein bS18 from Burkholderia multivorans (strain ATCC 17616 / 249).